A 743-amino-acid polypeptide reads, in one-letter code: MMTQANAYFYDGADVALLNGQYTDVFSLLGMHSANEGKALIVRCFLRNALSVDVISIKDGRKVASLDKVNEQGLFAGTLGRRVKPFLYLLRVEYPLCQLDIVDPYQFDSLLNSDDIYLFGEGSAERAYEFLGANWRQTQGVEGVHFCVWAPNAKRVSVVGDFNHWDDTRHVMRQHLANGLWELFLPNVVEGAHYKFDLVYQNGERHTKSDPMATQMECAPHNASIVPPKAHHSWNDTAWMSKRAATAWHKAPMSAYEVHLGSWRRKGEQGEQYLDYQDLIEQLIPYVKEQGFTHIELMPISEFPFDGSWGYQPVGLYAPTHRFGDANGLKAFVDACHQAGIGIILDWVSAHFPKDPHGLVRFDGTCLYEHEDPRKGTHPDWDTLIYNYDRGEVRSFLLSNACYWLREFHFDGLRLDAVSSMLYLDYSREPGQWLPNAYGGRENLEAISFLQILNQRLYQAFPGICMIAEESTAFAGVTKPTDQQGLGFGFKWNMGWMNDSLSYLGRDPLYRQFHHHQLTFSLMYAYTEQFMLSVSHDEVVHGKGSLLHKIPGDDWQKFATLRAYYGFMWGHPGKKLLFMGCEFGQRNEWNHNQSLDWHLLAYEPHQGVQRWLKDLNQLYQDMPALSVQDYEGAGFSWLDCENSRDSIFTFVRYGLAGDAPLVFVINMTPQLHTGFRIGLPLAGDYREYLNSDSQIYGGSNQGNAGTVVAESLPWQGMAQSALITVPPLGCLVIGPATGLAEAN.

The active-site Nucleophile is aspartate 416. The active-site Proton donor is glutamate 469.

Belongs to the glycosyl hydrolase 13 family. GlgB subfamily. In terms of assembly, monomer.

The enzyme catalyses Transfers a segment of a (1-&gt;4)-alpha-D-glucan chain to a primary hydroxy group in a similar glucan chain.. The protein operates within glycan biosynthesis; glycogen biosynthesis. Functionally, catalyzes the formation of the alpha-1,6-glucosidic linkages in glycogen by scission of a 1,4-alpha-linked oligosaccharide from growing alpha-1,4-glucan chains and the subsequent attachment of the oligosaccharide to the alpha-1,6 position. This is 1,4-alpha-glucan branching enzyme GlgB from Shewanella baltica (strain OS195).